The sequence spans 1064 residues: MTELIPGPKGLPLIGNVLDIDPVDAVVCLGRIADTYGHIYQLKVGGSAKIFISSRELVDELSDESRFTKLVSGPLAQLRNVCHDSLFTAQSDEPAWDLAHKILMPAFGPLAIRGMFDEMHDIASQLVVKWARFGPQDTIDVSGDFTRLTLDAIALCSMSTRFNSFYKQDQHPFVSSMLEVLAESGKRAVRPPFVNDYIFRGSLKHYNTEIATMRRIAMDVLAERRANPMACQKNDLLNAMINGRDPKTGEGLSDESTINNLIVFLIAGHETTSGLLSFLFYYLLTRPDVFEKAQKEVDELVGRGPVTIEHMSKLHYIEACLRETLRLHPTAPVITFKTKPGFEKESTTIGGGKYKIDRDQGIVALLVNIQRDPKVWGDDANEFKPERMTDEKFNNLPANCWKPFGNGIRGCIGRAFAWQESLLITAMLLQNFNFQLADPDYKLQIKQTLTIKPGNFFMHAKLRDHVDPLELEGILHGGAKKGSKIDGPSSGASLATTEQELQPMTILYGSDSGTCESMAQSLARAARGRGYGATVKTLDSAVEQVPKDQPVVIVSPSYNGQPPSNATDFVKWLEALDSKALKDVKYSVYGCGNKDYTSTFHRIPKLLDAEFERCGAKRIAETGLGDVTVGDIFSDFERWQDDQLWPALGVAHMDGDADAEFDIHVDRSGRAAELEVDADEATVQSNQVLTAPGEPEKRYITLKLPEGMQYKSGDHLSVLPLNDWGVVRRVFAWAQLPWDAVVTIPKGTNTSLPTGRQISAKDLLSGYVELSQPATRKNIAKLAASSPCPFTQKSLSKLEEHFDSDIAQRRLSVLDILEEFPAIDITFGNFISMLPPMRPRQYSIASSPMADPSTATLMWTVLNSEAYSGSGRRFLGVCSTYLAGLAEGDRVHVTVKPALRLFHPPSDPESMPIIMACAGTGLAPFRGFLEERVCQMKAGRALAPAYLFVGCRDPEKDALLKDELAQWERDGVVKIYYAFSRASDQSDGCKHVQDRIWNERDLVRKGLFEGNARFFMCGGSGAGKSVEDVVKRIYKDNKGESQEKAAESWFQDLKANRYVTEIFA.

The interval 1 to 484 (MTELIPGPKG…LHGGAKKGSK (484 aa)) is cytochrome P450. C411 serves as a coordination point for heme. Residues 485 to 1064 (IDGPSSGASL…ANRYVTEIFA (580 aa)) are NADPH-P-450 reductase. The region spanning 504 to 644 (MTILYGSDSG…DFERWQDDQL (141 aa)) is the Flavodoxin-like domain. FMN contacts are provided by residues 510 to 514 (SDSGT) and 588 to 620 (VYGC…KRIA). The FAD-binding FR-type domain maps to 676–905 (VDADEATVQS…KPALRLFHPP (230 aa)).

This sequence in the N-terminal section; belongs to the cytochrome P450 family. FAD serves as cofactor. The cofactor is FMN. Heme is required as a cofactor.

The catalysed reaction is ilicicolin A + NADPH + O2 + H(+) = ilicicolin A epoxide + NADP(+) + H2O. Its pathway is secondary metabolite biosynthesis; terpenoid biosynthesis. Its function is as follows. Bifunctional cytochrome P450/NADPH--P450 reductase; part of the asc-1 gene cluster that mediates the biosynthesis both ascochlorin and ascofuranone, a strong inhibitor of cyanide-insensitive alternative oxidases and a promising drug candidate against African trypanosomiasis. The first step in the pathway is performed by the non-reducing polyketide synthase ascC that produces orsellinic acid by condensing acetyl-CoA with 3 malonyl-CoA units. Orsellinic acid is then prenylated by the prenyltransferase ascA to yield ilicicolinic acid B. Ilicicolinic acid B is further reduced to ilicicolin B by the reductase ascB. The halogenase ascD then chlorinates ilicicolin B to produce ilicicolin A which is converted to ilicicolin A epoxide by the cytochrome P450 monooxygenase ascE that catalyzes stereoselective epoxidation of the terminal double bond of the prenyl group. Ilicicolin A epoxide is the last common precursor for the biosynthesis of ascofuranone and ascochlorin. The terpene cyclase ascF produces a monocyclic terpene, and the cyclization reaction is proposed to be initiated by protonation of the terminal epoxide of ilicicolin A epoxide to generate a monocyclic tertiarycation, which is followed by a series of hydride and methyl shifts with abstraction of proton, leading to the formation of the (14S,15R,19R)-trimethylcyclohexanone ring structure of ilicicolin C, which is finally reduced to ascochlorin by the dehydrogenase ascG. On the other hand, ilicicolin A epoxide is hydroxylated by the cytochrome P450 monooxygenase ascH, and the resultant product is cyclized by the terpene cyclase ascI to ascofuranol via protonation-initiated epoxide ring opening, which facilitates the 6-endo-tet cyclization to form the tetrahy-drofuran ring. Finally, ascofuranol is oxidized into ascofuranone by ascJ. This is Bifunctional cytochrome P450/NADPH--P450 reductase ascE from Acremonium egyptiacum (Oospora egyptiaca).